Here is a 98-residue protein sequence, read N- to C-terminus: MLSISININLAFAAALLGMLMFRSHMMSSLLCLEGMMLSMFILSTLIILNMQFTMSFTMPILLLVFAACEAAIGLALLVMVSNNYGLDYIQNLNLLQC.

Helical transmembrane passes span 2–22 (LSIS…MLMF), 29–49 (SLLC…LIIL), and 61–81 (ILLL…LVMV).

The protein belongs to the complex I subunit 4L family. In terms of assembly, core subunit of respiratory chain NADH dehydrogenase (Complex I) which is composed of 45 different subunits.

The protein resides in the mitochondrion inner membrane. It catalyses the reaction a ubiquinone + NADH + 5 H(+)(in) = a ubiquinol + NAD(+) + 4 H(+)(out). In terms of biological role, core subunit of the mitochondrial membrane respiratory chain NADH dehydrogenase (Complex I) which catalyzes electron transfer from NADH through the respiratory chain, using ubiquinone as an electron acceptor. Part of the enzyme membrane arm which is embedded in the lipid bilayer and involved in proton translocation. In Microcebus ravelobensis (Golden-brown mouse lemur), this protein is NADH-ubiquinone oxidoreductase chain 4L (MT-ND4L).